The following is a 558-amino-acid chain: MFLEAVYHRPRKNWSYAYNGTTVHLRIRTKKDDMTAVYALAGDKYMWDHTMEYVPMTKLATDELFDYWECEVTPPYRRVKYGFLLQQGHEKRWMTEYDFLTEPPRNPDRLFEYPFINPVDVFQPPAWVKDAIFYQIFPERFANGDTRNDPEGTLPWGSADPTPSCFFGGDLQGVIDHLDHLSKLGVNAVYFTPLFKATTNHKYDTEDYFQIDPQFGDKDTLKKLVDLCHERGIRVLLDAVFNHSGRTFPPFVDVLKNGEKSKYKDWFHIRSLPLEVVDGIPTYDTFAFEPLMPKLNTEHPDVKEYLLKAAEYWIRETGIDGWRLDVANEVSHQFWREFRRVVKQANPDAYILGEVWHESSIWLEGDQFDAVMNYPFTNAVLDFFIHQIADAEKFSFMLGKQLAGYPRQASEVMFNLLDSHDTARLLTQADGDKRKMKLAVLFQFTYFGTPCIYYGDEVGLDGGHDPGCRKCMEWDETKHDKDLFAFYQTVIRLRQAHAALRTGTFKFLTAEKNSRQIAYLREDDQDTILVVMNNDKAGHTLRCLSGMHSGPICGTTMS.

Residues Asn-143, Gly-168, and Asp-170 each coordinate Ca(2+). His-243 and Arg-323 together coordinate substrate. Asp-325 functions as the Nucleophile in the catalytic mechanism. Residue Glu-354 is the Proton donor of the active site. Residues 420–421 (HD), Asp-465, and Arg-469 each bind substrate.

The protein belongs to the glycosyl hydrolase 13 family. As to quaternary structure, monomer. Depending on the pH of the solution, exists as a monomer, a homodimer or as an assembly of six homodimers forming a dodecamer, which is catalytically the most efficient form of the enzyme. Ca(2+) serves as cofactor.

It catalyses the reaction cyclomaltodextrin + H2O = linear maltodextrin. It carries out the reaction Hydrolysis of pullulan to panose (6-alpha-D-glucosylmaltose).. Hydrolysis of beta-cyclodextrin is inhibited by Cu(2+), Zn(2+) and Ag(+), and activated by Ca(2+), EGTA and EDTA. Activity is increased over twofold in the presence of 5 mM EDTA. Competitively inhibited by acarbose and methyl 6-amino-6-deoxy-alpha-D-glucopyranoside by reducing the rate of the ring opening step of the reaction. Its function is as follows. Hydrolyzes alpha-, beta- and gamma-cyclodextrins and the resulting linear maltodextrins, with the highest activity with beta-cyclodextrin (cyclomaltoheptaose). Soluble starch is hydrolyzed slowly, but it is nevertheless preferred over pullulan as a substrate. Is able to hydrolyze amylose and amylopectin, with a very strong preference for amylose, with maltose and glucose as the main products. Maltose and glucose are the main hydrolysis products of cyclomaltodextrins, maltodextrins and starch, whereas panose is the main hydrolysis product of pullulan. Acarbose is partially hydrolyzed to glucose and pseudotrisaccharide. No activity with maltose as substrate. Has transglycosylating activity with high concentrations of maltotriose, maltotetraose and starch. This is Cyclomaltodextrinase from Bacillus sp.